A 175-amino-acid chain; its full sequence is Adenylyl-sulfate kinase (175 aa).

12 to 19 serves as a coordination point for ATP; it reads GLSGAGKT. The active-site Phosphoserine intermediate is the Ser86.

Belongs to the APS kinase family.

The enzyme catalyses adenosine 5'-phosphosulfate + ATP = 3'-phosphoadenylyl sulfate + ADP + H(+). It participates in sulfur metabolism; hydrogen sulfide biosynthesis; sulfite from sulfate: step 2/3. Catalyzes the synthesis of activated sulfate. This chain is Adenylyl-sulfate kinase, found in Synechococcus sp. (strain JA-2-3B'a(2-13)) (Cyanobacteria bacterium Yellowstone B-Prime).